Here is a 210-residue protein sequence, read N- to C-terminus: Putative 3-methyladenine DNA glycosylase (210 aa).

This sequence belongs to the DNA glycosylase MPG family.

The sequence is that of Putative 3-methyladenine DNA glycosylase from Lactobacillus helveticus (strain DPC 4571).